A 197-amino-acid polypeptide reads, in one-letter code: dITP/XTP pyrophosphatase (197 aa).

8–13 serves as a coordination point for substrate; sequence TGNAGK. Residues Glu-40 and Asp-69 each contribute to the Mg(2+) site. The Proton acceptor role is filled by Asp-69. Substrate-binding positions include Ser-70, 154–157, Lys-177, and 182–183; these read FGYD and HR.

It belongs to the HAM1 NTPase family. In terms of assembly, homodimer. It depends on Mg(2+) as a cofactor.

The catalysed reaction is XTP + H2O = XMP + diphosphate + H(+). It catalyses the reaction dITP + H2O = dIMP + diphosphate + H(+). It carries out the reaction ITP + H2O = IMP + diphosphate + H(+). Functionally, pyrophosphatase that catalyzes the hydrolysis of nucleoside triphosphates to their monophosphate derivatives, with a high preference for the non-canonical purine nucleotides XTP (xanthosine triphosphate), dITP (deoxyinosine triphosphate) and ITP. Seems to function as a house-cleaning enzyme that removes non-canonical purine nucleotides from the nucleotide pool, thus preventing their incorporation into DNA/RNA and avoiding chromosomal lesions. In Salmonella typhi, this protein is dITP/XTP pyrophosphatase (rdgB).